The following is a 79-amino-acid chain: Large ribosomal subunit protein bL28 (79 aa).

Positions 1–26 (MAKVCQVTGKRPQSGNNVSHANKKTN) are disordered. The segment covering 11 to 20 (RPQSGNNVSH) has biased composition (polar residues).

This sequence belongs to the bacterial ribosomal protein bL28 family.

The chain is Large ribosomal subunit protein bL28 from Coxiella burnetii (strain CbuK_Q154) (Coxiella burnetii (strain Q154)).